The primary structure comprises 332 residues: Aspartate carbamoyltransferase catalytic subunit (332 aa).

Carbamoyl phosphate contacts are provided by arginine 78 and threonine 79. Position 106 (lysine 106) interacts with L-aspartate. Carbamoyl phosphate is bound by residues arginine 128, histidine 156, and glutamine 159. Arginine 189 and arginine 243 together coordinate L-aspartate. Carbamoyl phosphate-binding residues include glycine 284 and proline 285.

Belongs to the aspartate/ornithine carbamoyltransferase superfamily. ATCase family. In terms of assembly, heterododecamer (2C3:3R2) of six catalytic PyrB chains organized as two trimers (C3), and six regulatory PyrI chains organized as three dimers (R2).

The catalysed reaction is carbamoyl phosphate + L-aspartate = N-carbamoyl-L-aspartate + phosphate + H(+). It participates in pyrimidine metabolism; UMP biosynthesis via de novo pathway; (S)-dihydroorotate from bicarbonate: step 2/3. In terms of biological role, catalyzes the condensation of carbamoyl phosphate and aspartate to form carbamoyl aspartate and inorganic phosphate, the committed step in the de novo pyrimidine nucleotide biosynthesis pathway. The sequence is that of Aspartate carbamoyltransferase catalytic subunit from Caulobacter vibrioides (strain ATCC 19089 / CIP 103742 / CB 15) (Caulobacter crescentus).